The following is a 431-amino-acid chain: Argininosuccinate lyase (431 aa).

It belongs to the lyase 1 family. Argininosuccinate lyase subfamily.

It localises to the cytoplasm. The catalysed reaction is 2-(N(omega)-L-arginino)succinate = fumarate + L-arginine. Its pathway is amino-acid biosynthesis; L-arginine biosynthesis; L-arginine from L-ornithine and carbamoyl phosphate: step 3/3. This is Argininosuccinate lyase from Stenotrophomonas maltophilia (strain K279a).